The sequence spans 364 residues: Peptide chain release factor 2 (364 aa).

Residue Q251 is modified to N5-methylglutamine.

It belongs to the prokaryotic/mitochondrial release factor family. Post-translationally, methylated by PrmC. Methylation increases the termination efficiency of RF2.

It is found in the cytoplasm. Peptide chain release factor 2 directs the termination of translation in response to the peptide chain termination codons UGA and UAA. The polypeptide is Peptide chain release factor 2 (Campylobacter hominis (strain ATCC BAA-381 / DSM 21671 / CCUG 45161 / LMG 19568 / NCTC 13146 / CH001A)).